The primary structure comprises 463 residues: Eukaryotic translation initiation factor 3 subunit E (463 aa).

One can recognise a PCI domain in the interval 224–407 (FNLGENQGCQ…NMLHITRPHA (184 aa)). The segment at 432–463 (QSSVGEPRERGERGERGNKGGRGRPRTQEVAA) is disordered. Basic and acidic residues predominate over residues 437 to 449 (EPRERGERGERGN).

Belongs to the eIF-3 subunit E family. As to quaternary structure, component of the eukaryotic translation initiation factor 3 (eIF-3) complex.

It is found in the cytoplasm. Its function is as follows. Component of the eukaryotic translation initiation factor 3 (eIF-3) complex, which is involved in protein synthesis of a specialized repertoire of mRNAs and, together with other initiation factors, stimulates binding of mRNA and methionyl-tRNAi to the 40S ribosome. The eIF-3 complex specifically targets and initiates translation of a subset of mRNAs involved in cell proliferation. In Cryptococcus neoformans var. neoformans serotype D (strain JEC21 / ATCC MYA-565) (Filobasidiella neoformans), this protein is Eukaryotic translation initiation factor 3 subunit E.